The chain runs to 159 residues: Putative 4-hydroxy-4-methyl-2-oxoglutarate aldolase (159 aa).

Substrate is bound by residues 74–77 and arginine 96; that span reads GDNL. Aspartate 97 contributes to the a divalent metal cation binding site.

The protein belongs to the class II aldolase/RraA-like family. As to quaternary structure, homotrimer. The cofactor is a divalent metal cation.

The catalysed reaction is 4-hydroxy-4-methyl-2-oxoglutarate = 2 pyruvate. The enzyme catalyses oxaloacetate + H(+) = pyruvate + CO2. Catalyzes the aldol cleavage of 4-hydroxy-4-methyl-2-oxoglutarate (HMG) into 2 molecules of pyruvate. Also contains a secondary oxaloacetate (OAA) decarboxylase activity due to the common pyruvate enolate transition state formed following C-C bond cleavage in the retro-aldol and decarboxylation reactions. This Bacillus anthracis protein is Putative 4-hydroxy-4-methyl-2-oxoglutarate aldolase.